Here is a 179-residue protein sequence, read N- to C-terminus: Protein GrpE (179 aa).

Residues 1 to 10 show a composition bias toward basic and acidic residues; it reads MSKKEEKQEE. Positions 1–23 are disordered; sequence MSKKEEKQEELQEEMEAVDAAGV.

This sequence belongs to the GrpE family. Homodimer.

It is found in the cytoplasm. Functionally, participates actively in the response to hyperosmotic and heat shock by preventing the aggregation of stress-denatured proteins, in association with DnaK and GrpE. It is the nucleotide exchange factor for DnaK and may function as a thermosensor. Unfolded proteins bind initially to DnaJ; upon interaction with the DnaJ-bound protein, DnaK hydrolyzes its bound ATP, resulting in the formation of a stable complex. GrpE releases ADP from DnaK; ATP binding to DnaK triggers the release of the substrate protein, thus completing the reaction cycle. Several rounds of ATP-dependent interactions between DnaJ, DnaK and GrpE are required for fully efficient folding. The chain is Protein GrpE from Enterococcus faecalis (strain ATCC 700802 / V583).